We begin with the raw amino-acid sequence, 262 residues long: Sugar fermentation stimulation protein homolog (262 aa).

This sequence belongs to the SfsA family.

The chain is Sugar fermentation stimulation protein homolog from Lawsonia intracellularis (strain PHE/MN1-00).